A 317-amino-acid polypeptide reads, in one-letter code: Fe-S cluster assembly protein dre2 (317 aa).

The segment at 22–152 (PVQAKRTLLL…KPNFEPSAAV (131 aa)) is N-terminal SAM-like domain. Residues 153–209 (PLKFGLKKKNKPTPTAVPSIPTGFAAPMGIDSPVTNHDRDEDDELINEDTLLSEEDL) are linker. Cysteine 219, cysteine 230, cysteine 233, and cysteine 235 together coordinate [2Fe-2S] cluster. The segment at 219–235 (CQPKTGRRRRACKDCTC) is fe-S binding site A. The [4Fe-4S] cluster site is built by cysteine 280, cysteine 283, cysteine 291, and cysteine 294. 2 short sequence motifs (cx2C motif) span residues 280 to 283 (CGSC) and 291 to 294 (CDGC). A fe-S binding site B region spans residues 280 to 294 (CGSCALGDAFRCDGC).

The protein belongs to the anamorsin family. Monomer. Interacts with tah18. Interacts with mia40. It depends on [2Fe-2S] cluster as a cofactor. [4Fe-4S] cluster serves as cofactor.

The protein resides in the cytoplasm. It localises to the mitochondrion intermembrane space. Functionally, component of the cytosolic iron-sulfur (Fe-S) protein assembly (CIA) machinery required for the maturation of extramitochondrial Fe-S proteins. Part of an electron transfer chain functioning in an early step of cytosolic Fe-S biogenesis, facilitating the de novo assembly of a [4Fe-4S] cluster on the scaffold complex cfd1-nbp35. Electrons are transferred to dre2 from NADPH via the FAD- and FMN-containing protein tah18. Tah18-dre2 are also required for the assembly of the diferric tyrosyl radical cofactor of ribonucleotide reductase (RNR), probably by providing electrons for reduction during radical cofactor maturation in the catalytic small subunit rnr2. The sequence is that of Fe-S cluster assembly protein dre2 from Penicillium rubens (strain ATCC 28089 / DSM 1075 / NRRL 1951 / Wisconsin 54-1255) (Penicillium chrysogenum).